A 254-amino-acid chain; its full sequence is Germin-like protein 4-1 (254 aa).

The first 27 residues, 1–27 (MASRAFAAVFAAVALVVCSSVLPRALA), serve as a signal peptide directing secretion. Cys-37 and Cys-52 are disulfide-bonded. The Cupin type-1 domain maps to 67–220 (KALGVPGNTV…AFMIDKDQVD (154 aa)). Mn(2+)-binding residues include His-115, His-117, Glu-122, and His-166.

It belongs to the germin family. Oligomer (believed to be a pentamer but probably hexamer).

It localises to the secreted. It is found in the extracellular space. The protein resides in the apoplast. May play a role in plant defense. Probably has no oxalate oxidase activity even if the active site is conserved. This Oryza sativa subsp. japonica (Rice) protein is Germin-like protein 4-1.